The following is a 372-amino-acid chain: Anhydro-N-acetylmuramic acid kinase (372 aa).

14–21 (GTSLDGVD) contributes to the ATP binding site.

This sequence belongs to the anhydro-N-acetylmuramic acid kinase family.

It carries out the reaction 1,6-anhydro-N-acetyl-beta-muramate + ATP + H2O = N-acetyl-D-muramate 6-phosphate + ADP + H(+). The protein operates within amino-sugar metabolism; 1,6-anhydro-N-acetylmuramate degradation. It functions in the pathway cell wall biogenesis; peptidoglycan recycling. In terms of biological role, catalyzes the specific phosphorylation of 1,6-anhydro-N-acetylmuramic acid (anhMurNAc) with the simultaneous cleavage of the 1,6-anhydro ring, generating MurNAc-6-P. Is required for the utilization of anhMurNAc either imported from the medium or derived from its own cell wall murein, and thus plays a role in cell wall recycling. In Photorhabdus laumondii subsp. laumondii (strain DSM 15139 / CIP 105565 / TT01) (Photorhabdus luminescens subsp. laumondii), this protein is Anhydro-N-acetylmuramic acid kinase.